Reading from the N-terminus, the 662-residue chain is Methyl-accepting chemotaxis protein TlpA (662 aa).

Residues 1 to 16 (MKKTLTTIRRSSIARR) are Cytoplasmic-facing. The helical transmembrane segment at 17 to 37 (LIISFLLILIVPITALSVSAY) threads the bilayer. Topologically, residues 38-281 (QSAVASLDVQ…IHDAASRVLI (244 aa)) are extracellular. Residues 152–228 (VTEPYESISS…KAGTELKGDW (77 aa)) enclose the Cache domain. The helical transmembrane segment at 282-302 (MASIVLAIAIGAGMTAIYFVI) threads the bilayer. Residues 303 to 355 (RSITKPLRRIVASAEKISEGDLTETIEINSKDELGVLSESFNHMAHSLRSLIH) enclose the HAMP domain. Residues 303–662 (RSITKPLRRI…DLTKQFKVDK (360 aa)) are Cytoplasmic-facing. 4 positions are modified to glutamate methyl ester (Glu): Glu370, Glu594, Glu629, and Glu636. The 237-residue stretch at 374-610 (SADQTSRATE…EISAASNDIT (237 aa)) folds into the Methyl-accepting transducer domain.

Belongs to the methyl-accepting chemotaxis (MCP) protein family. Interacts with YabA.

Its subcellular location is the cell membrane. In terms of biological role, chemotactic-signal transducers respond to changes in the concentration of attractants and repellents in the environment, transduce a signal from the outside to the inside of the cell, and facilitate sensory adaptation through the variation of the level of methylation. All amino acids serve as attractants in B.subtilis, they appear to cause an increase in the turnover methyl groups, leading to methylation of an unidentified acceptor, while repellents have been shown to cause a decrease in methyl group turnover. The methyl groups are added by a methyltransferase and removed by a methylesterase. This is Methyl-accepting chemotaxis protein TlpA from Bacillus subtilis (strain 168).